We begin with the raw amino-acid sequence, 86 residues long: Acyl carrier protein (86 aa).

The Carrier domain occupies 2-82 (ATVFERVKKV…AVVDYLKSKG (81 aa)). O-(pantetheine 4'-phosphoryl)serine is present on Ser37.

It belongs to the acyl carrier protein (ACP) family. In terms of processing, 4'-phosphopantetheine is transferred from CoA to a specific serine of apo-ACP by AcpS. This modification is essential for activity because fatty acids are bound in thioester linkage to the sulfhydryl of the prosthetic group.

The protein localises to the cytoplasm. It participates in lipid metabolism; fatty acid biosynthesis. Functionally, carrier of the growing fatty acid chain in fatty acid biosynthesis. This chain is Acyl carrier protein, found in Dehalococcoides mccartyi (strain ATCC BAA-2100 / JCM 16839 / KCTC 5957 / BAV1).